We begin with the raw amino-acid sequence, 299 residues long: Lathosterol oxidase (299 aa).

A run of 3 helical transmembrane segments spans residues 32-52 (VSLL…CATL), 79-99 (FTVK…LLEL), and 117-137 (IHLI…IYWI). One can recognise a Fatty acid hydroxylase domain in the interval 124–252 (ISFLFFTDML…YFTLWDRIGG (129 aa)). The Histidine box-1 motif lies at 138-143 (HRGLHH). The Histidine box-2 motif lies at 151–155 (HKPHH). Positions 228–233 (HHTDHH) match the Histidine box-3 motif. Serine 253 is subject to Phosphoserine.

It belongs to the sterol desaturase family. Fe cation is required as a cofactor.

It localises to the endoplasmic reticulum membrane. The catalysed reaction is a Delta(7)-sterol + 2 Fe(II)-[cytochrome b5] + O2 + 2 H(+) = a Delta(5),Delta(7)-sterol + 2 Fe(III)-[cytochrome b5] + 2 H2O. It catalyses the reaction lathosterol + 2 Fe(II)-[cytochrome b5] + O2 + 2 H(+) = 7-dehydrocholesterol + 2 Fe(III)-[cytochrome b5] + 2 H2O. It carries out the reaction 5alpha-cholesta-7,24-dien-3beta-ol + 2 Fe(II)-[cytochrome b5] + O2 + 2 H(+) = 7-dehydrodesmosterol + 2 Fe(III)-[cytochrome b5] + 2 H2O. It participates in steroid biosynthesis; cholesterol biosynthesis. Catalyzes the penultimate step of the biosynthesis of cholesterol, the dehydrogenation of lathosterol into 7-dehydrocholesterol (7-DHC). Cholesterol is the major sterol component in mammalian membranes and a precursor for bile acid and steroid hormone synthesis. In addition to its essential role in cholesterol biosynthesis, it also indirectly regulates ferroptosis through the production of 7-DHC. By diverting the spread of damage caused by peroxyl radicals from the phospholipid components to its sterol nucleus, 7-DHC prevents this form of cell death. This is Lathosterol oxidase from Rattus norvegicus (Rat).